The chain runs to 305 residues: Putative lipid kinase SAR0780 (305 aa).

Positions 3 to 139 (NKYTHGVLFY…YDVIKINNQY (137 aa)) constitute a DAGKc domain. ATP is bound by residues S44, 74–80 (GDGTVNE), and T101. Positions 220, 223, and 225 each coordinate Mg(2+). E281 acts as the Proton acceptor in catalysis.

The protein belongs to the diacylglycerol/lipid kinase family. It depends on Mg(2+) as a cofactor.

Its function is as follows. May catalyze the ATP-dependent phosphorylation of lipids other than diacylglycerol (DAG). In fact, is not able to exhibit diacylglycerol kinase activity in vitro. This Staphylococcus aureus (strain MRSA252) protein is Putative lipid kinase SAR0780.